Reading from the N-terminus, the 283-residue chain is V-set domain containing T-cell activation inhibitor 1 (283 aa).

The first 24 residues, 1–24, serve as a signal peptide directing secretion; it reads MASLGQIIFWSIINIIIILAGAIA. Ig-like V-type domains are found at residues 35–144 and 153–241; these read HFIT…ANLE and PEIN…IKVT. 2 disulfides stabilise this stretch: Cys56–Cys130 and Cys168–Cys225. N-linked (GlcNAc...) asparagine glycosylation is present at Asn216. Residue Gly257 is the site of GPI-anchor amidated glycine attachment. A propeptide spans 258–283 (removed in mature form); sequence PSPCVFSSAFVAGWALLSLSCCLMLR.

Belongs to the immunoglobulin superfamily. BTN/MOG family. Post-translationally, N-glycosylated. As to expression, expressed on the surface of professional antigen-presenting cells (at protein level). Widely expressed, including in kidney, liver, lung, pancreas, placenta, prostate, spleen, testis and thymus.

Its subcellular location is the cell membrane. Negatively regulates T-cell-mediated immune response by inhibiting T-cell activation, proliferation, cytokine production and development of cytotoxicity. When expressed on the cell surface of tumor macrophages, plays an important role, together with regulatory T-cells (Treg), in the suppression of tumor-associated antigen-specific T-cell immunity. Involved in promoting epithelial cell transformation. This chain is V-set domain containing T-cell activation inhibitor 1, found in Mus musculus (Mouse).